A 217-amino-acid chain; its full sequence is GRB2-related adapter protein (217 aa).

The region spanning 1–58 (MESVALYSFQATESDELAFNKGDTLKILNMEDDQNWYKAELRGVEGFIPKNYIRVKPH) is the SH3 1 domain. The SH2 domain maps to 60–154 (WYSGRISRQL…QIFLRDEEPL (95 aa)). An SH3 2 domain is found at 158–217 (PGACFAQAQFDFSAQDPSQLSFRRGDIIEVLERPDPHWWRGRSCGRVGFFPRSYVQPVHL).

This sequence belongs to the GRB2/sem-5/DRK family. As to quaternary structure, associates through its SH2 domain with ligand-activated receptors for stem cell factor (KIT) and erythropoietin (EPOR). Also forms a stable complex with the Bcr-Abl oncoprotein. GRAP is associated with the Ras guanine nucleotide exchange factor SOS1, primarily through its N-terminal SH3 domain. Interacts with phosphorylated LAT upon TCR activation. Interacts with SHB.

It localises to the membrane. The protein localises to the synapse. Couples signals from receptor and cytoplasmic tyrosine kinases to the Ras signaling pathway. Plays a role in the inner ear and in hearing. In Homo sapiens (Human), this protein is GRB2-related adapter protein.